Consider the following 114-residue polypeptide: Class I hydrophobin 1 (114 aa).

An N-terminal signal peptide occupies residues 1–20 (MQFTKMSAFATLALATLAAA). 4 disulfide bridges follow: cysteine 33/cysteine 93, cysteine 40/cysteine 87, cysteine 41/cysteine 74, and cysteine 94/cysteine 107.

Belongs to the fungal hydrophobin family. As to quaternary structure, self-assembles to form functional amyloid fibrils called rodlets. Self-assembly into fibrillar rodlets occurs spontaneously at hydrophobic:hydrophilic interfaces and the rodlets further associate laterally to form amphipathic monolayers.

The protein localises to the secreted. Its subcellular location is the cell wall. In terms of biological role, aerial growth, conidiation, and dispersal of filamentous fungi in the environment rely upon a capability of their secreting small amphipathic proteins called hydrophobins (HPBs) with low sequence identity. Class I can self-assemble into an outermost layer of rodlet bundles on aerial cell surfaces, conferring cellular hydrophobicity that supports fungal growth, development and dispersal; whereas Class II form highly ordered films at water-air interfaces through intermolecular interactions but contribute nothing to the rodlet structure. Pnh1 is a class I hydrophobin that might be involved in the attachment of the hydrophilic wall of hyphae to the hydrophobic surface of wood under inorganic phosphate (Pi)-deficient conditions and enable the mycelium to degrade efficiently the components of wood and to acquire nutrients containing Pi. This chain is Class I hydrophobin 1, found in Pholiota nameko.